A 352-amino-acid polypeptide reads, in one-letter code: Endoplasmic reticulum GDP-fucose transporter (352 aa).

10 helical membrane-spanning segments follow: residues 9–29 (LGML…ELII), 34–54 (GAGN…GLVF), 70–90 (YVIL…AFNF), 96–116 (LHMI…IVLL), 126–146 (SSVA…SGDV), 163–183 (FFWW…TAYM), 201–221 (ALFF…GNIV), 249–271 (LMLF…VYVL), 276–298 (ASLT…SIIY), and 305–325 (LNHW…ANVI). The Prevents secretion from ER motif lies at 350 to 352 (KVE).

The protein belongs to the nucleotide-sugar transporter family. SLC35B subfamily.

It is found in the endoplasmic reticulum membrane. Functionally, sugar transporter that specifically mediates the transport of UDP-N-acetylglucosamine (UDP-GlcNAc), GDP-fucose and UDP-xylose. Functions redundantly with Gfr in the O-fucosylation of Notch, positively regulating Notch signaling. Involved in the biosynthesis of heparan sulfate-glycosaminoglycan (HS-GAG) and in Dpp signaling in the wing imaginal disk. This chain is Endoplasmic reticulum GDP-fucose transporter, found in Drosophila melanogaster (Fruit fly).